Reading from the N-terminus, the 312-residue chain is Porphobilinogen deaminase (312 aa).

The residue at position 241 (cysteine 241) is an S-(dipyrrolylmethanemethyl)cysteine.

This sequence belongs to the HMBS family. Monomer. The cofactor is dipyrromethane.

The enzyme catalyses 4 porphobilinogen + H2O = hydroxymethylbilane + 4 NH4(+). The protein operates within porphyrin-containing compound metabolism; protoporphyrin-IX biosynthesis; coproporphyrinogen-III from 5-aminolevulinate: step 2/4. Functionally, tetrapolymerization of the monopyrrole PBG into the hydroxymethylbilane pre-uroporphyrinogen in several discrete steps. This is Porphobilinogen deaminase from Aliarcobacter butzleri (strain RM4018) (Arcobacter butzleri).